The sequence spans 273 residues: Homeobox protein ceh-43 (273 aa).

Disordered regions lie at residues 47–79 (NGAT…EEAF) and 153–204 (RRSK…LVSS). A DNA-binding region (homeobox) is located at residues 102-161 (MRKPRTIYNSSQLQMLQKKFQKTQYLALPDRAALAHELGLSQTQVKIWFQNRRSKQKKQK).

The protein belongs to the distal-less homeobox family. Predominantly expressed in the head hypdodermis, neuronal support cells and CAN neurons.

Its subcellular location is the nucleus. Its function is as follows. Probable transcription factor. Binds to the sequence motif 5'-ATAAT-3' in regulatory elements. Required for development of the anterior hypodermis during embryonic morphogenesis for cell adhesion; also affects embryonic and larval viability. Modulates and maintains dopaminergic neuron differentiation. May activate dopamine pathway genes in concert with ETS domain-containing protein ast-1, and homeobox proteins ceh-40 and ceh-20. In Caenorhabditis elegans, this protein is Homeobox protein ceh-43 (ceh-43).